We begin with the raw amino-acid sequence, 666 residues long: Chaperone protein dnaK1 (666 aa).

T198 bears the Phosphothreonine; by autocatalysis mark.

It belongs to the heat shock protein 70 family.

Functionally, acts as a chaperone. The sequence is that of Chaperone protein dnaK1 (dnaK1) from Prochlorococcus marinus (strain SARG / CCMP1375 / SS120).